The following is a 172-amino-acid chain: Ribosome maturation factor RimM (172 aa).

The 73-residue stretch at 96–168 (DGEFYYHEII…RVDVEIPEGL (73 aa)) folds into the PRC barrel domain.

This sequence belongs to the RimM family. Binds ribosomal protein uS19.

The protein localises to the cytoplasm. Functionally, an accessory protein needed during the final step in the assembly of 30S ribosomal subunit, possibly for assembly of the head region. Essential for efficient processing of 16S rRNA. May be needed both before and after RbfA during the maturation of 16S rRNA. It has affinity for free ribosomal 30S subunits but not for 70S ribosomes. The polypeptide is Ribosome maturation factor RimM (Streptococcus sanguinis (strain SK36)).